Reading from the N-terminus, the 223-residue chain is Proteasome subunit beta type-1 (223 aa).

This sequence belongs to the peptidase T1B family. Component of the 20S core complex of the 26S proteasome. The 26S proteasome is composed of a core protease (CP), known as the 20S proteasome, capped at one or both ends by the 19S regulatory particle (RP/PA700). The 20S proteasome core is composed of 28 subunits that are arranged in four stacked rings, resulting in a barrel-shaped structure. The two end rings are each formed by seven alpha subunits, and the two central rings are each formed by seven beta subunits. The catalytic chamber with the active sites is on the inside of the barrel. As to expression, present in all tissues examined. Slightly lower levels in roots.

It localises to the cytoplasm. The protein resides in the nucleus. In terms of biological role, non-catalytic component of the proteasome, a multicatalytic proteinase complex which is characterized by its ability to cleave peptides with Arg, Phe, Tyr, Leu, and Glu adjacent to the leaving group at neutral or slightly basic pH. The proteasome has an ATP-dependent proteolytic activity. This chain is Proteasome subunit beta type-1 (PBF1), found in Arabidopsis thaliana (Mouse-ear cress).